We begin with the raw amino-acid sequence, 368 residues long: Phenylalanine--tRNA ligase alpha subunit (368 aa).

Position 268 (E268) interacts with Mg(2+).

This sequence belongs to the class-II aminoacyl-tRNA synthetase family. Phe-tRNA synthetase alpha subunit type 1 subfamily. Tetramer of two alpha and two beta subunits. It depends on Mg(2+) as a cofactor.

It is found in the cytoplasm. The catalysed reaction is tRNA(Phe) + L-phenylalanine + ATP = L-phenylalanyl-tRNA(Phe) + AMP + diphosphate + H(+). The protein is Phenylalanine--tRNA ligase alpha subunit of Nitrobacter hamburgensis (strain DSM 10229 / NCIMB 13809 / X14).